A 325-amino-acid chain; its full sequence is Replication factor C small subunit (325 aa).

44–51 (GPPGTGKT) is a binding site for ATP.

The protein belongs to the activator 1 small subunits family. RfcS subfamily. In terms of assembly, heteromultimer composed of small subunits (RfcS) and large subunits (RfcL).

In terms of biological role, part of the RFC clamp loader complex which loads the PCNA sliding clamp onto DNA. This Thermofilum pendens (strain DSM 2475 / Hrk 5) protein is Replication factor C small subunit.